Consider the following 663-residue polypeptide: Probable methylenetetrahydrofolate reductase (NADPH) (663 aa).

Glu-76 (proton donor/acceptor) is an active-site residue. NAD(+) contacts are provided by residues 76 to 81 and 107 to 108; these read EFFPPR and TW. Thr-107 carries the post-translational modification Phosphothreonine. FAD-binding positions include 107–108, His-141, 171–173, 187–188, Tyr-210, 214–217, Asp-223, and Lys-230; these read TW, RGD, RA, and HPQA. Asp-173 contributes to the substrate binding site. Substrate-binding residues include Gln-241, Tyr-334, and Arg-338. Ser-408 bears the Phosphoserine mark. A Phosphothreonine modification is found at Thr-465. Residues 477–480, 497–501, Thr-578, and Thr-591 each bind S-adenosyl-L-methionine; these read QPET and TVNSQ.

The protein belongs to the methylenetetrahydrofolate reductase family. FAD serves as cofactor.

The catalysed reaction is (6S)-5-methyl-5,6,7,8-tetrahydrofolate + NADP(+) = (6R)-5,10-methylene-5,6,7,8-tetrahydrofolate + NADPH + H(+). Its pathway is one-carbon metabolism; tetrahydrofolate interconversion. This Caenorhabditis elegans protein is Probable methylenetetrahydrofolate reductase (NADPH).